The chain runs to 462 residues: Neuronal acetylcholine receptor subunit non-alpha-2 (462 aa).

Residues 1-30 (MTLAVIGLFTLFTSIIAITPAREFVSLAER) form the signal peptide. The Extracellular portion of the chain corresponds to 31–234 (EDALLRELFQ…ITYSFILKRL (204 aa)). 2 N-linked (GlcNAc...) asparagine glycosylation sites follow: Asn53 and Asn168. A disulfide bridge links Cys155 with Cys169. Transmembrane regions (helical) follow at residues 235 to 259 (PLFY…VFYL), 267 to 284 (VSLS…LLVI), and 301 to 322 (YLLF…VINV). The Cytoplasmic segment spans residues 323–428 (HHRSSATYHP…WKFVAQVLDR (106 aa)). A compositionally biased stretch (basic and acidic residues) spans 362–372 (ELEPHSPDLKP). A disordered region spans residues 362–384 (ELEPHSPDLKPRNKKGPPGPEGE). The chain crosses the membrane as a helical span at residues 429-446 (IFLWTFLTVSVLGTILIF).

The protein belongs to the ligand-gated ion channel (TC 1.A.9) family. Acetylcholine receptor (TC 1.A.9.1) subfamily. In terms of assembly, neuronal AChR seems to be composed of two different type of subunits: alpha and beta.

The protein localises to the postsynaptic cell membrane. The protein resides in the cell membrane. In terms of biological role, after binding acetylcholine, the AChR responds by an extensive change in conformation that affects all subunits and leads to opening of an ion-conducting channel across the plasma membrane. In Carassius auratus (Goldfish), this protein is Neuronal acetylcholine receptor subunit non-alpha-2.